The primary structure comprises 914 residues: Chitin synthase B (914 aa).

Disordered stretches follow at residues 1–67 (MAYQ…TSGY) and 112–140 (YARS…GGGL). Over residues 130-140 (GGAGSGGGGGL) the composition is skewed to gly residues. 7 helical membrane-spanning segments follow: residues 543–562 (WLNG…GRMY), 586–606 (ILTW…MDLV), 627–647 (IVNT…FILA), 662–682 (SFVV…YLVV), 712–732 (AGII…ASFM), 843–863 (LVTF…SDGV), and 882–902 (ALLW…CWFL).

The protein belongs to the chitin synthase family. Class III subfamily.

It localises to the cell membrane. The enzyme catalyses [(1-&gt;4)-N-acetyl-beta-D-glucosaminyl](n) + UDP-N-acetyl-alpha-D-glucosamine = [(1-&gt;4)-N-acetyl-beta-D-glucosaminyl](n+1) + UDP + H(+). In terms of biological role, polymerizes chitin, a structural polymer of the cell wall and septum, by transferring the sugar moiety of UDP-GlcNAc to the non-reducing end of the growing chitin polymer. Plays an important role in septal growth or maintenance. Mediates colony spore formation. The chain is Chitin synthase B from Aspergillus niger (strain ATCC MYA-4892 / CBS 513.88 / FGSC A1513).